The sequence spans 199 residues: Probable thymidylate kinase (199 aa).

7 to 14 (GLDGSGKT) serves as a coordination point for ATP.

This sequence belongs to the thymidylate kinase family.

It carries out the reaction dTMP + ATP = dTDP + ADP. This Halobacterium salinarum (strain ATCC 29341 / DSM 671 / R1) protein is Probable thymidylate kinase.